A 1154-amino-acid polypeptide reads, in one-letter code: Coiled-coil domain-containing protein 136 (1154 aa).

Residues 1–48 (MQAMEGEVLLPALYEEEEEEEEEEEEVEEEEEQVQKGGSVGSLSVNKH) form a disordered region. A compositionally biased stretch (acidic residues) spans 14 to 32 (YEEEEEEEEEEEEVEEEEE). Ser52 is subject to Phosphoserine. 2 coiled-coil regions span residues 696 to 733 (QAKQ…LQVQ) and 859 to 974 (KLQA…RPSV). Positions 1031–1058 (DGLAKEEEKKEEMEEEKKQVKEEAKEQC) are enriched in basic and acidic residues. The tract at residues 1031–1131 (DGLAKEEEKK…SSPTPNPPIF (101 aa)) is disordered. Positions 1077–1109 (DQEENEEDKEEEEKEEDSEEEEDDADSSLESPE) are enriched in acidic residues. The chain crosses the membrane as a helical span at residues 1130–1150 (IFSLPLVGLVVISALLWCWWA).

In terms of tissue distribution, expressed in gastric tissues. Down-regulated in gastric cancer.

Its subcellular location is the cytoplasmic vesicle. The protein localises to the secretory vesicle. It localises to the acrosome membrane. Functionally, may play a role in acrosome formation in spermatogenesis and in fertilization. The sequence is that of Coiled-coil domain-containing protein 136 (CCDC136) from Homo sapiens (Human).